A 299-amino-acid polypeptide reads, in one-letter code: Taste receptor type 2 member 50 (299 aa).

Residue Met1 is a topological domain, extracellular. The chain crosses the membrane as a helical span at residues 2–22 (ITFLYIFFSILILVLFVLGNF). Residues 23–55 (ANGFIALVNFIDWVKRKKISSADQILTALAVSR) are Cytoplasmic-facing. Residues 56-76 (IGLLWALLLNWYLTVLNPAFY) form a helical membrane-spanning segment. Residues 77–87 (SVELRITSYNA) lie on the Extracellular side of the membrane. The chain crosses the membrane as a helical span at residues 88–108 (WVVTNHFSMWLAASLSIFYLL). The Cytoplasmic segment spans residues 109–126 (KIANFSNLIFLHLKRRVR). A helical membrane pass occupies residues 127-147 (SVILVILLGTLIFLVCHLLVA). Topologically, residues 148-181 (NMDESMWAEEYEGNMTGKMKLRNTVHLSYLTVTT) are extracellular. A glycan (N-linked (GlcNAc...) asparagine) is linked at Asn161. A helical membrane pass occupies residues 182–202 (LWSFIPFTLSLISFLMLICSL). Residues 203–229 (CKHLKKMQLHGEGSQDLSTKVHIKALQ) are Cytoplasmic-facing. The helical transmembrane segment at 230–250 (TLISFLLLCAIFFLFLIISVW) threads the bilayer. Over 251–259 (SPRRLQNDP) the chain is Extracellular. Residues 260 to 280 (VVMVSKAVGNIYLAFDSFILI) form a helical membrane-spanning segment. The Cytoplasmic portion of the chain corresponds to 281 to 299 (WRTKKLKHTFLLILCQIRC).

This sequence belongs to the G-protein coupled receptor T2R family.

It localises to the membrane. In terms of biological role, receptor that may play a role in the perception of bitterness and is gustducin-linked. May play a role in sensing the chemical composition of the gastrointestinal content. The activity of this receptor may stimulate alpha gustducin, mediate PLC-beta-2 activation and lead to the gating of TRPM5. The chain is Taste receptor type 2 member 50 (TAS2R50) from Gorilla gorilla gorilla (Western lowland gorilla).